The primary structure comprises 98 residues: NADH-ubiquinone oxidoreductase chain 4L (98 aa).

3 consecutive transmembrane segments (helical) span residues 1 to 21 (MSLV…GLLM), 29 to 49 (SLLC…LTIL), and 61 to 81 (IILL…LVMV).

The protein belongs to the complex I subunit 4L family. In terms of assembly, core subunit of respiratory chain NADH dehydrogenase (Complex I) which is composed of 45 different subunits.

It localises to the mitochondrion inner membrane. It catalyses the reaction a ubiquinone + NADH + 5 H(+)(in) = a ubiquinol + NAD(+) + 4 H(+)(out). Functionally, core subunit of the mitochondrial membrane respiratory chain NADH dehydrogenase (Complex I) which catalyzes electron transfer from NADH through the respiratory chain, using ubiquinone as an electron acceptor. Part of the enzyme membrane arm which is embedded in the lipid bilayer and involved in proton translocation. This chain is NADH-ubiquinone oxidoreductase chain 4L (MT-ND4L), found in Muntiacus feae (Fea's muntjac).